A 651-amino-acid polypeptide reads, in one-letter code: MNHQEVADRVLNAIGKNNIQAAAHCATRLRLVIKDESKIDQQALDDDADVKGTFETNGQYQIIIGPGDVDKVYDALIVKTGLKEVTPDDIKAVAAAGQNKNPLMDFLKVLSDIFIPIVPALVAGGLLMALNNVLTAEHLFMAKSVVEVYPGLKGIAEMINAMASAPFTFLPILLGFSATKRFGGNPYLGATMGMIMVLPSLVNGYSVATTMAAGKMVYWNVFGLHVAQAGYQGQVLPVLGVAFILATLEKFFHKHIKGAFDFTFTPMFAIVITGFLTFTIVGPVLRTVSDALTNGLVGLYNSTGWIGMGIFGLLYSAIVITGLHQTFPAIETQLLANVAKTGGSFIFPVASMANIGQGAATLAIFFATKSQKQKALTSSAGVSALLGITEPAIFGVNLKMKFPFVFAAIASGIASAFLGLFHVLSVAMGPASVIGFISIASKSIPAFMLSAVISFVVAFIPTFIYAKRTLGDDRDQVKSPAPTSTVINVNDEIISAPVTGASESLKQVNDQVFSAEIMGKGAAIVPSSDQVVAPADGVITVTYDSHHAYGIKTTAGAEILIHLGLDTVNLNGEHFTTNVQKGDTVHQGDLLGTFDIAALKAANYDPTVMLIVTNTANYANVERLKVTNVQAGEQLVALTAPAASSVAATTV.

Residues 3 to 86 form the PTS EIIB type-1 domain; that stretch reads HQEVADRVLN…IVKTGLKEVT (84 aa). C25 acts as the Phosphocysteine intermediate; for EIIB activity in catalysis. 10 helical membrane passes run 109–129, 158–178, 182–202, 204–224, 226–246, 264–284, 303–323, 345–365, 404–424, and 444–464; these read VLSD…LLMA, MINA…GFSA, FGGN…PSLV, GYSV…VFGL, VAQA…FILA, FTPM…VGPV, TGWI…ITGL, FIFP…LAIF, FVFA…FHVL, and IPAF…PTFI. A PTS EIIC type-1 domain is found at 121–481; sequence LVAGGLLMAL…DDRDQVKSPA (361 aa). The 105-residue stretch at 510–614 folds into the PTS EIIA type-1 domain; that stretch reads DQVFSAEIMG…DPTVMLIVTN (105 aa). H562 functions as the Tele-phosphohistidine intermediate; for EIIA activity in the catalytic mechanism.

The protein localises to the cell membrane. The catalysed reaction is N(pros)-phospho-L-histidyl-[protein](out) + sucrose = sucrose 6(G)-phosphate(in) + L-histidyl-[protein]. Its function is as follows. The phosphoenolpyruvate-dependent sugar phosphotransferase system (sugar PTS), a major carbohydrate active transport system, catalyzes the phosphorylation of incoming sugar substrates concomitantly with their translocation across the cell membrane. This system is involved in sucrose transport. The polypeptide is PTS system sucrose-specific EIIBCA component (scrA) (Pediococcus pentosaceus).